The primary structure comprises 275 residues: MANFTAADVKELRDRLGAGMMDSKNALVEADGDIEKAIEILRLKGQKGNAKRGDRSTAEGLVAASTQDGAATLIELACETDFVAKNDKFIALSESVLAAVVAAGASTVEEALQAPAGEQTVDQLISDQAAILGEKIALRRVARLAGEHQEVYLHRTSKDLPPQVGVVVDYSGTDAETARSIAQHIAFANPEYLAREDVPADKVEAERAIVTEISRNEGKPEAALPKIIEGRLTGFFKQVALLEQDYAKDNKQSVKKVVEAAGLTVTGFARFKVGA.

Residues 80–83 (TDFV) are involved in Mg(2+) ion dislocation from EF-Tu.

Belongs to the EF-Ts family.

The protein resides in the cytoplasm. Functionally, associates with the EF-Tu.GDP complex and induces the exchange of GDP to GTP. It remains bound to the aminoacyl-tRNA.EF-Tu.GTP complex up to the GTP hydrolysis stage on the ribosome. The protein is Elongation factor Ts of Clavibacter michiganensis subsp. michiganensis (strain NCPPB 382).